We begin with the raw amino-acid sequence, 304 residues long: MSPSTSIEALDQPVKPVVFRPLTLRRRIKNSVATTFFFTSFVVALIPLVWLLWVVIARGWFAVTRSGWWTHSLRGVLPEQFAGGVYHALYGTLVQAGVAAVLAVPLGLMTAVYLVEYGTGRMSRVTTFTVDVLAGVPSIVAALFVFSLWIATLGFQQSAFAVALALVLLMLPVVVRAGEEMLRLVPDELREASYALGVPKWKTIVRIVAPIAMPGIVSGILLSIARVVGETAPVLVLVGYSHSINLDVFHGNMASLPLLIYTELTNPEHAGFLRVWGAALTLIIVVATINLAAAMIRFVATRRR.

6 helical membrane-spanning segments follow: residues 36-56 (FFFT…WVVI), 96-116 (AGVA…YLVE), 132-152 (VLAG…WIAT), 155-175 (FQQS…PVVV), 204-224 (IVRI…LLSI), and 276-296 (WGAA…AAMI). The ABC transmembrane type-1 domain maps to 89-297 (LYGTLVQAGV…TINLAAAMIR (209 aa)).

This sequence belongs to the binding-protein-dependent transport system permease family. CysTW subfamily.

The protein localises to the cell membrane. In terms of biological role, part of the binding-protein-dependent transport system for phosphate; probably responsible for the translocation of the substrate across the membrane. This Mycobacterium tuberculosis (strain CDC 1551 / Oshkosh) protein is Phosphate transport system permease protein PstA 1 (pstA1).